We begin with the raw amino-acid sequence, 427 residues long: MKLLKRLVSVFAIVLAVGSNAFAGDEVRIVIDEGVDGARPIAVVPFVGSAPEDISKIVADDLRNSGKFNPIAVSQMPQRPTSAAEVNPEAWSNIGIDAIVIGQVVPSGNGYSITYQLIDTVGASGTPGTVLMQNSYTVTNKWLRYGAHTVSDEVFEKLTAIRGAFRTRIAYVVQKNGGSQPYEVRVADYDGYNQFIVNRSAQPIMSPAWSPDGQRLAYVSFENKKSQLVVQDLNSGARKVVASFQGHNGAPAFSPDGSRLAFASSRDGVLNIYVMGANGGTPTQLTSGAGNNTEPAWSPDGNSILFTSDRSGSPQVYRMDASGGSATAVGGRGSAQISADGKTLVMINGNNNVVKQDLTTGVSEVLSTSFLGESPSLSPNGIMIIYSSTQGLGKVLQLVSADGRFKASLPGSDGQVKFPAWSPYLTK.

An N-terminal signal peptide occupies residues 1 to 23 (MKLLKRLVSVFAIVLAVGSNAFA).

It belongs to the TolB family. As to quaternary structure, the Tol-Pal system is composed of five core proteins: the inner membrane proteins TolA, TolQ and TolR, the periplasmic protein TolB and the outer membrane protein Pal. They form a network linking the inner and outer membranes and the peptidoglycan layer.

It is found in the periplasm. Functionally, part of the Tol-Pal system, which plays a role in outer membrane invagination during cell division and is important for maintaining outer membrane integrity. The polypeptide is Tol-Pal system protein TolB (Haemophilus influenzae (strain ATCC 51907 / DSM 11121 / KW20 / Rd)).